Reading from the N-terminus, the 428-residue chain is C4-dicarboxylate transport protein (428 aa).

A run of 9 helical transmembrane segments spans residues 4–24 (SLFKSLYFQVLTAIAIGILLG), 44–64 (LIKMIIAPVIFCTVVTGIAGM), 76–96 (VALLYFEIVSTIALIIGLIIV), 142–162 (IGAFASGNILQVLLFAVLFGF), 184–204 (VIFGIINMIMRLAPIGAFGAM), 222–242 (LIICFYITCILFVVVVLGTIA), 289–309 (VVGLVIPTGYSFNLDGTSIYL), 326–346 (IFHQITLLVVLLLSSKGAAGV), and 352–372 (IVLAATISAVGHLPVAGLALI).

The protein belongs to the dicarboxylate/amino acid:cation symporter (DAACS) (TC 2.A.23) family.

It localises to the cell inner membrane. Its function is as follows. Responsible for the transport of dicarboxylates such as succinate, fumarate, and malate from the periplasm across the membrane. In Salmonella gallinarum (strain 287/91 / NCTC 13346), this protein is C4-dicarboxylate transport protein.